The following is a 560-amino-acid chain: Dihydroxy-acid dehydratase (560 aa).

Residue Cys52 coordinates [2Fe-2S] cluster. Asp84 contacts Mg(2+). Cys125 contributes to the [2Fe-2S] cluster binding site. Asp126 and Lys127 together coordinate Mg(2+). N6-carboxylysine is present on Lys127. Cys197 contributes to the [2Fe-2S] cluster binding site. A Mg(2+)-binding site is contributed by Glu448. Ser474 acts as the Proton acceptor in catalysis.

Belongs to the IlvD/Edd family. As to quaternary structure, homodimer. It depends on [2Fe-2S] cluster as a cofactor. The cofactor is Mg(2+).

It catalyses the reaction (2R)-2,3-dihydroxy-3-methylbutanoate = 3-methyl-2-oxobutanoate + H2O. It carries out the reaction (2R,3R)-2,3-dihydroxy-3-methylpentanoate = (S)-3-methyl-2-oxopentanoate + H2O. The protein operates within amino-acid biosynthesis; L-isoleucine biosynthesis; L-isoleucine from 2-oxobutanoate: step 3/4. It participates in amino-acid biosynthesis; L-valine biosynthesis; L-valine from pyruvate: step 3/4. In terms of biological role, functions in the biosynthesis of branched-chain amino acids. Catalyzes the dehydration of (2R,3R)-2,3-dihydroxy-3-methylpentanoate (2,3-dihydroxy-3-methylvalerate) into 2-oxo-3-methylpentanoate (2-oxo-3-methylvalerate) and of (2R)-2,3-dihydroxy-3-methylbutanoate (2,3-dihydroxyisovalerate) into 2-oxo-3-methylbutanoate (2-oxoisovalerate), the penultimate precursor to L-isoleucine and L-valine, respectively. This Francisella tularensis subsp. tularensis (strain WY96-3418) protein is Dihydroxy-acid dehydratase.